Reading from the N-terminus, the 73-residue chain is Acyl carrier protein (73 aa).

The Carrier domain maps to 1 to 73 (MAVFEKVQDI…DLVKYVENNK (73 aa)). Ser35 carries the post-translational modification O-(pantetheine 4'-phosphoryl)serine.

This sequence belongs to the acyl carrier protein (ACP) family. In terms of processing, 4'-phosphopantetheine is transferred from CoA to a specific serine of apo-ACP by AcpS. This modification is essential for activity because fatty acids are bound in thioester linkage to the sulfhydryl of the prosthetic group.

The protein resides in the cytoplasm. It participates in lipid metabolism; fatty acid biosynthesis. Its function is as follows. Carrier of the growing fatty acid chain in fatty acid biosynthesis. The polypeptide is Acyl carrier protein (Lactococcus lactis subsp. lactis (strain IL1403) (Streptococcus lactis)).